Here is a 377-residue protein sequence, read N- to C-terminus: MRVSAFALLAAAATAAATSVQGAAEGFAKGVTGGGSATPVYPTTTDELVSYLGDDEARVIVLTKTFDFRGTEGTTTAKGCSPWGTASGCQLAINKDGWCDNYQPDAPQTTITYDTAGMLGITVKSNKSLIGQGTAGVIKGKGIRIVNGAKNVIVQNIAITDINPQYVWGGDAITLNDVDMVWIDHVTTARIARQHIVLGTNACNRVTISNNYFNGVSDYSATCDGYHYWGLYLDGSNDMVTLQGNYIHHFSGRSPKVGGNTLLHAVNNYWYDSTGHAFEIAAGSSVLAEGNVFQNINAPVESSSLAGNLFTSPDSNTNKVCSSYLGHTCQLNAFGSSGSFNQADEGFLVNFKGKNVASADAYSAAQSVPNNAGQGKL.

Residues 1–17 form the signal peptide; the sequence is MRVSAFALLAAAATAAA. 2 cysteine pairs are disulfide-bonded: cysteine 80–cysteine 99 and cysteine 89–cysteine 223. N-linked (GlcNAc...) asparagine glycosylation is present at asparagine 126. Arginine 253 is an active-site residue. Cysteine 321 and cysteine 329 are joined by a disulfide.

The protein belongs to the polysaccharide lyase 1 family.

It localises to the secreted. The enzyme catalyses Eliminative cleavage of (1-&gt;4)-alpha-D-galacturonan methyl ester to give oligosaccharides with 4-deoxy-6-O-methyl-alpha-D-galact-4-enuronosyl groups at their non-reducing ends.. Pectinolytic enzymes consist of four classes of enzymes: pectin lyase, polygalacturonase, pectin methylesterase and rhamnogalacturonase. Among pectinolytic enzymes, pectin lyase is the most important in depolymerization of pectin, since it cleaves internal glycosidic bonds of highly methylated pectins. This Emericella nidulans (strain FGSC A4 / ATCC 38163 / CBS 112.46 / NRRL 194 / M139) (Aspergillus nidulans) protein is Probable pectin lyase D (pelD).